The following is a 460-amino-acid chain: MKEYRTITQVAGPLVFVEKTEPVGYQELVNLVLADGSEKRGQVLDTSDDIVVVQVFETTTGIGKDTGVRFTGETIKMPVGKDMLGRILSGAGKPKDGGPDIVPEKRLEITGAAINPWARGSPRQFIQTGISTIDLTNTLVRGQKLPIFSGSGLPHNEIALQIARQAKVPGSDEQFAVVFAAMGITKEEENQFMAEFERTGALEHAVVFLNLADDPAVERIITPRLALTTAEYLAFELDYHVLVILTDMTNYCEALRQIGAAREEVPGRRGYPGYMYTDLASLYERAGIIKGKKGSVTQLSILTMPGDDITHPIPDLSGYITEGQIVVNRDLHRKGIYPPINVLPSLSRLMNLGIGKGFTREDHKKVSDQLYAGYAEGVDLRGLVAIVGKDALSERDRGFLEFAEMFENRFVRQGKDEDRTIDESLDLGWDLLKDIPEEQLVRIDRELIQKYHPKYRKKAE.

It belongs to the ATPase alpha/beta chains family. Has multiple subunits with at least A(3), B(3), C, D, E, F, H, I and proteolipid K(x).

The protein localises to the cell membrane. In terms of biological role, component of the A-type ATP synthase that produces ATP from ADP in the presence of a proton gradient across the membrane. The B chain is a regulatory subunit. This chain is A-type ATP synthase subunit B 1, found in Methanospirillum hungatei JF-1 (strain ATCC 27890 / DSM 864 / NBRC 100397 / JF-1).